A 288-amino-acid chain; its full sequence is 2-hydroxy-6-oxononadienedioate/2-hydroxy-6-oxononatrienedioate hydrolase (288 aa).

One can recognise an AB hydrolase-1 domain in the interval 38 to 274 (ALVLLHGSGP…RCGHWAQWEH (237 aa)). His-268 serves as the catalytic Proton acceptor.

This sequence belongs to the AB hydrolase superfamily. MhpC family. As to quaternary structure, homodimer.

The enzyme catalyses (2Z,4E)-2-hydroxy-6-oxonona-2,4-dienedioate + H2O = (2Z)-2-hydroxypenta-2,4-dienoate + succinate + H(+). The catalysed reaction is (2Z,4E,7E)-2-hydroxy-6-oxonona-2,4,7-trienedioate + H2O = (2Z)-2-hydroxypenta-2,4-dienoate + fumarate + H(+). It participates in aromatic compound metabolism; 3-phenylpropanoate degradation. Functionally, catalyzes the cleavage of the C5-C6 bond of 2-hydroxy-6-oxononadienedioate and 2-hydroxy-6-oxononatrienedioate, a dienol ring fission product of the bacterial meta-cleavage pathway for degradation of phenylpropionic acid. The protein is 2-hydroxy-6-oxononadienedioate/2-hydroxy-6-oxononatrienedioate hydrolase of Burkholderia vietnamiensis (strain G4 / LMG 22486) (Burkholderia cepacia (strain R1808)).